A 553-amino-acid polypeptide reads, in one-letter code: Aminotransferase FUM8 (553 aa).

Positions 1 to 25 (MSPAPAILALRRVYNFCLLVDEAHG) are cleaved as a signal peptide. The N-linked (GlcNAc...) asparagine glycan is linked to asparagine 480.

It belongs to the class-II pyridoxal-phosphate-dependent aminotransferase family. BioF subfamily. Pyridoxal 5'-phosphate is required as a cofactor.

The protein resides in the endoplasmic reticulum. Its pathway is mycotoxin biosynthesis. Its function is as follows. Aminotransferase; part of the gene cluster that mediates the biosynthesis of fumonisins B1 (FB1), B2 (FB2), B3 (FB3), and B4 (FB4), which are carcinogenic mycotoxins. Within the pathway, FUM8 catalyzes the release of the C-18 polyketide chain from the highly reducing polyketide synthase FUM1 by a nucleophilic attack of a carbanion, which is derived from R-carbon of alanine by decarboxylation, on the carbonyl carbon of polyketide acyl chain. The biosynthesis starts with the FUM1-catalyzed carbon chain assembly from one molecule of acetyl-CoA, eight molecules of malonyl-CoA, and two molecules of methionine (in S-adenosyl form). The C18 polyketide chain is released from the enzyme by a nucleophilic attack of a carbanion, which is derived from R-carbon of alanine by decarboxylation, on the carbonyl carbon of polyketide acyl chain. This step is catalyzed by the pyridoxal 5'-phosphate-dependent aminoacyl transferase FUM8. The resultant 3-keto intermediate is then stereospecifically reduced to a 3-hydroxyl product by reductase FUM13. Subsequent oxidations at C-10 by the cytochrome P450 monooxygenase FUM2, C-14 and C-15 by FUM6, FUM12 or FUM15, tricarballylic esterification of the hydroxyl groups on C-14 and C-15 by acyltransferase FUM14, and C-5 hydroxylation by 2-keto-glutarate-dependent dioxygenase FUM3 furnish the biosynthesis of fumonisins. The tricarballylic moieties are most likely derived from the citric acid cycle, and their addition to the carbon backbone may involve FUM7, FUM10, FUM11 and FUM14. This chain is Aminotransferase FUM8, found in Gibberella moniliformis (strain M3125 / FGSC 7600) (Maize ear and stalk rot fungus).